Here is a 154-residue protein sequence, read N- to C-terminus: Ribosome maturation factor RimP (154 aa).

This sequence belongs to the RimP family.

The protein resides in the cytoplasm. Required for maturation of 30S ribosomal subunits. The chain is Ribosome maturation factor RimP from Deinococcus deserti (strain DSM 17065 / CIP 109153 / LMG 22923 / VCD115).